The sequence spans 293 residues: MNPFWNMSSASVRKRSENDEKISTGDQKISPPRSSSAKKQLPPIPKNAVPITKPISPSLSVQSTNGTHASYGPFYLEYSLLAEFTLVVKQKLPGVYVQPSYRSALMWFGVIFIRHGLYQDGVFKFTVYIPDNYPDGECPRLVFDVPVFHPLVDPISGELDVKRAFTKWRRNHNHIWQVLMYARRIFYKIDTTSPLNPEAAVLYEKDVQLFKSKVVDSVKLCNSHLFDQPKIEDPYAIIFSPWNPVLHDDARERMLAQKKKSEEQSKGLHVSGLSWVKPGSVLPFSKEENSLQT.

Over residues 1–11 (MNPFWNMSSAS) the composition is skewed to polar residues. The tract at residues 1–45 (MNPFWNMSSASVRKRSENDEKISTGDQKISPPRSSSAKKQLPPIP) is disordered. A compositionally biased stretch (basic and acidic residues) spans 14 to 23 (KRSENDEKIS). Over residues 24 to 38 (TGDQKISPPRSSSAK) the composition is skewed to polar residues. The UBC core domain occupies 75–223 (YLEYSLLAEF…VVDSVKLCNS (149 aa)). Over residues 256-266 (AQKKKSEEQSK) the composition is skewed to basic and acidic residues. Positions 256–293 (AQKKKSEEQSKGLHVSGLSWVKPGSVLPFSKEENSLQT) are disordered.

Belongs to the ubiquitin-conjugating enzyme family. FTS subfamily.

It is found in the cytoplasm. The protein resides in the cell membrane. May function to promote vesicle trafficking and/or fusion. May also regulate apoptosis. The sequence is that of AKT-interacting protein homolog A (aktip-a) from Xenopus laevis (African clawed frog).